We begin with the raw amino-acid sequence, 303 residues long: Diaminopimelate epimerase (303 aa).

3 residues coordinate substrate: Asn15, Gln47, and Asn67. The active-site Proton donor is the Cys76. Substrate is bound by residues Gly77–Asn78, Asn163, Asn197, and Glu215–Arg216. Cys224 serves as the catalytic Proton acceptor. Residue Gly225 to Ser226 coordinates substrate. The disordered stretch occupies residues Asp279–Ala303.

It belongs to the diaminopimelate epimerase family. Homodimer.

The protein resides in the cytoplasm. It catalyses the reaction (2S,6S)-2,6-diaminopimelate = meso-2,6-diaminopimelate. It functions in the pathway amino-acid biosynthesis; L-lysine biosynthesis via DAP pathway; DL-2,6-diaminopimelate from LL-2,6-diaminopimelate: step 1/1. Catalyzes the stereoinversion of LL-2,6-diaminopimelate (L,L-DAP) to meso-diaminopimelate (meso-DAP), a precursor of L-lysine and an essential component of the bacterial peptidoglycan. The protein is Diaminopimelate epimerase of Brucella canis (strain ATCC 23365 / NCTC 10854 / RM-666).